Reading from the N-terminus, the 137-residue chain is ATP synthase epsilon chain (137 aa).

This sequence belongs to the ATPase epsilon chain family. In terms of assembly, F-type ATPases have 2 components, CF(1) - the catalytic core - and CF(0) - the membrane proton channel. CF(1) has five subunits: alpha(3), beta(3), gamma(1), delta(1), epsilon(1). CF(0) has three main subunits: a, b and c.

Its subcellular location is the cell membrane. In terms of biological role, produces ATP from ADP in the presence of a proton gradient across the membrane. In Mycoplasmopsis synoviae (strain 53) (Mycoplasma synoviae), this protein is ATP synthase epsilon chain.